Reading from the N-terminus, the 258-residue chain is MGKTVVIKCGGSVLDELSPAFFASVNAMRKQGMEVVIVHGGGPEIGQMLKTLRVPSEFVNGLRKTTKDVLAVVEMVLSGKVNKQLASMLRQHGLPAVGVSGVDGGLLEAEPIDLAKLGYVGRVKTVRSQLLRTLLAAGYIPVISPLGIDQNGQTYNINADTAAGAVAAAIGASQLAFVTNVPGILRDGALVAEATAEMIERLIEDGVITGGMIPKVQAALSALSDALPEVMIVSGKTTFYQNGTWHGTTIRKEVGVYL.

Residues 41–42 (GG), arginine 63, and asparagine 156 each bind substrate.

It belongs to the acetylglutamate kinase family. ArgB subfamily. Homodimer.

The protein localises to the cytoplasm. It carries out the reaction N-acetyl-L-glutamate + ATP = N-acetyl-L-glutamyl 5-phosphate + ADP. Its pathway is amino-acid biosynthesis; L-arginine biosynthesis; N(2)-acetyl-L-ornithine from L-glutamate: step 2/4. In terms of biological role, catalyzes the ATP-dependent phosphorylation of N-acetyl-L-glutamate. The protein is Acetylglutamate kinase of Geobacillus stearothermophilus (Bacillus stearothermophilus).